Reading from the N-terminus, the 110-residue chain is Insulin (110 aa).

The first 24 residues, 1-24 (MALWMRLLPLLALLALWGPDPAQA), serve as a signal peptide directing secretion. Intrachain disulfides connect C31-C96, C43-C109, and C95-C100. Positions 57–87 (EAEDLQVGQVELGGGPGAGSLQPLALEGSLQ) are cleaved as a propeptide — c peptide.

Belongs to the insulin family. Heterodimer of a B chain and an A chain linked by two disulfide bonds.

The protein resides in the secreted. Insulin decreases blood glucose concentration. It increases cell permeability to monosaccharides, amino acids and fatty acids. It accelerates glycolysis, the pentose phosphate cycle, and glycogen synthesis in liver. This chain is Insulin (INS), found in Pongo pygmaeus (Bornean orangutan).